A 638-amino-acid chain; its full sequence is Adhesion G-protein coupled receptor F2 (638 aa).

The N-terminal stretch at 1 to 25 (MISARWLYCLVLLLATESCRLFCQA) is a signal peptide. Topologically, residues 26–386 (ASKSKENVMP…ESPVLTYITY (361 aa)) are extracellular. Residues Asn155, Asn219, Asn248, Asn293, and Asn311 are each glycosylated (N-linked (GlcNAc...) asparagine). The GAIN-B domain occupies 233 to 377 (PRNSLGKNFT…SILMSPNTVE (145 aa)). Cystine bridges form between Cys329–Cys356 and Cys344–Cys358. The segment at 329-377 (CVGWHSLESRWDRRACKMIQENSRQAICRCQPNKFFTSFSILMSPNTVE) is GPS. Residues 387–407 (IGLGISICSLIICLAIEALVW) traverse the membrane as a helical segment. The Cytoplasmic portion of the chain corresponds to 408–422 (SQVTKTEISYLRHLC). The chain crosses the membrane as a helical span at residues 423–443 (IANIAVTLLMADVWFIVASFL). At 444–465 (SGPIVHHNGCVTATFFVHFFYL) the chain is on the extracellular side. Residues 466 to 486 (SVFFWMLAKALLILYGILIVF) form a helical membrane-spanning segment. Residues 487–493 (HTLPKSC) lie on the Cytoplasmic side of the membrane. Residues 494–514 (LVASLFTVGYGCPLVIAVITL) form a helical membrane-spanning segment. Residues 515 to 541 (AVTEPGKGYLRPEACWLNWDMTKALLA) lie on the Extracellular side of the membrane. The chain crosses the membrane as a helical span at residues 542-562 (FVVPALAIVVVNLITVTLVII). The Cytoplasmic segment spans residues 563 to 586 (KTQRAAVGSSMFQEVRAIVRICKN). Residues 587 to 607 (IAILTPLLGLTWGFGIATVVA) traverse the membrane as a helical segment. Residues 608-610 (GHS) are Extracellular-facing. Residues 611–631 (LAFHIIFSLLNALQVSPDAMI) form a helical membrane-spanning segment. Residues 632 to 638 (ESEWRGC) lie on the Cytoplasmic side of the membrane.

It belongs to the G-protein coupled receptor 2 family. Adhesion G-protein coupled receptor (ADGR) subfamily.

The protein localises to the membrane. Its function is as follows. Orphan receptor. The polypeptide is Adhesion G-protein coupled receptor F2 (Adgrf2) (Rattus norvegicus (Rat)).